The sequence spans 732 residues: Coagulation factor XIII A chain (732 aa).

Positions 1 to 27 (MSETSRTAFGGRRAVPPNNSNAAEDDL) are disordered. At Ser-2 the chain carries N-acetylserine. Residues 2–38 (SETSRTAFGGRRAVPPNNSNAAEDDLPTVELQGVVPR) constitute a propeptide, activation peptide. Active-site residues include Cys-315, His-374, and Asp-397. Residues Asn-437, Asp-439, Glu-486, and Glu-491 each coordinate Ca(2+). A glycan (N-linked (GlcNAc...) asparagine) is linked at Asn-614.

Belongs to the transglutaminase superfamily. Transglutaminase family. Tetramer of two A chains (F13A1) and two B (F13B) chains. It depends on Ca(2+) as a cofactor. The activation peptide is released by thrombin.

It is found in the cytoplasm. The protein localises to the secreted. It carries out the reaction L-glutaminyl-[protein] + L-lysyl-[protein] = [protein]-L-lysyl-N(6)-5-L-glutamyl-[protein] + NH4(+). In terms of biological role, factor XIII is activated by thrombin and calcium ion to a transglutaminase that catalyzes the formation of gamma-glutamyl-epsilon-lysine cross-links between fibrin chains, thus stabilizing the fibrin clot. Also cross-link alpha-2-plasmin inhibitor, or fibronectin, to the alpha chains of fibrin. In Homo sapiens (Human), this protein is Coagulation factor XIII A chain (F13A1).